A 534-amino-acid chain; its full sequence is MNTVRPIRRALLSVSDKTGILEFAQALHAHGVELLSTGGTARLLAEHGLPVIEASDHTGHPEIMDGRVKTLHPKIHGGILARRGQDEAVMAENNILPIDLVVVNLYPFASTVANPDCTLADAVENIDIGGPTMVRAAAKNHQDVTIVVNASDYARVLAEMKTNQGSTTLKIRFELAVAAFEHTAAYDGMIANYFGNLVAMDADTSDEQQALHQESSFPRTFNSQFIKKQDLRYGENSHQKAAFYVDPQIDEASVASAIQLQGKALSYNNIADTDAALECVKEFDGPACVIVKHANPCGVALGKDLLDAYNRAYQTDPTSAFGGIIAFNGELDAATASAIVERQFVEVIIAPSVSQAARDIVAAKANVRLLECGKWETKTTSLDYKRVNGGLLVQDRDQGMVGLADIKVVSKRQPTEAELKDLLFCWKVAKFVKSNAIVYAKEGMTIGVGAGQMSRVYSAKIAGIKASDEGLVVENSVMASDAFFPFRDGIDAAAAAGISCIIQPGGSIRDEEIIKAADEHGMAMVFTGMRHFRH.

Residues 1-148 (MNTVRPIRRA…KNHQDVTIVV (148 aa)) enclose the MGS-like domain.

It belongs to the PurH family.

It carries out the reaction (6R)-10-formyltetrahydrofolate + 5-amino-1-(5-phospho-beta-D-ribosyl)imidazole-4-carboxamide = 5-formamido-1-(5-phospho-D-ribosyl)imidazole-4-carboxamide + (6S)-5,6,7,8-tetrahydrofolate. It catalyses the reaction IMP + H2O = 5-formamido-1-(5-phospho-D-ribosyl)imidazole-4-carboxamide. It functions in the pathway purine metabolism; IMP biosynthesis via de novo pathway; 5-formamido-1-(5-phospho-D-ribosyl)imidazole-4-carboxamide from 5-amino-1-(5-phospho-D-ribosyl)imidazole-4-carboxamide (10-formyl THF route): step 1/1. It participates in purine metabolism; IMP biosynthesis via de novo pathway; IMP from 5-formamido-1-(5-phospho-D-ribosyl)imidazole-4-carboxamide: step 1/1. In Shewanella denitrificans (strain OS217 / ATCC BAA-1090 / DSM 15013), this protein is Bifunctional purine biosynthesis protein PurH.